The chain runs to 403 residues: Synaptotagmin-7 (403 aa).

The Vesicular segment spans residues 1–16 (MYRDPEAASPGAPTRD). Residues 17–37 (VLLVSAIITVSLSVTIVLCGL) form a helical membrane-spanning segment. The Cytoplasmic segment spans residues 38–403 (CHWCQRKLGK…PVAQWHQLKA (366 aa)). A Phosphoserine modification is found at S52. Positions 53-103 (LETVGTPDSGRGRGEKKAIKLPAGGKAVNTAPVPGQTPHDESDRRTETRSS) are disordered. The residue at position 58 (T58) is a Phosphothreonine. Residue S61 is modified to Phosphoserine. Residues 90–100 (PHDESDRRTET) are compositionally biased toward basic and acidic residues. S119 and S122 each carry phosphoserine. C2 domains follow at residues 135–255 (NLGR…TFWK) and 266–399 (SRGE…AQWH). D166 lines the Ca(2+) pocket. G169 and S171 each carry asymmetric dimethylarginine. Ca(2+) contacts are provided by D172, D225, D227, S230, D233, D297, D303, D357, D359, S362, and D365.

Belongs to the synaptotagmin family. As to quaternary structure, homodimer. Can also form heterodimers with SYT6, SYT9 and SYT10. Interacts with calmodulin (CALM1, CALM2 or CALM3). Interacts with CD63; required for localization to lysosomes. Interacts with APP. The cofactor is Ca(2+). Palmitoylated at its vesicular N-terminus; palmitoylation is required for localization to lysosome and phagocytosis in macrophages. As to expression, widely expressed. Expressed in insulin-secreting cells. Present in glucagon-secreting cells (at protein level).

The protein resides in the cell membrane. It localises to the presynaptic cell membrane. The protein localises to the cytoplasmic vesicle. It is found in the secretory vesicle. Its subcellular location is the synaptic vesicle membrane. The protein resides in the lysosome membrane. It localises to the phagosome membrane. The protein localises to the peroxisome membrane. It is found in the secretory vesicle membrane. Ca(2+) sensor involved in Ca(2+)-dependent exocytosis of secretory and synaptic vesicles through Ca(2+) and phospholipid binding to the C2 domain. Ca(2+) induces binding of the C2-domains to phospholipid membranes and to assembled SNARE-complexes; both actions contribute to triggering exocytosis. SYT7 binds Ca(2+) with high affinity and slow kinetics compared to other synaptotagmins. Involved in Ca(2+)-triggered lysosomal exocytosis, a major component of the plasma membrane repair. Ca(2+)-regulated delivery of lysosomal membranes to the cell surface is also involved in the phagocytic uptake of particles by macrophages. Ca(2+)-triggered lysosomal exocytosis also plays a role in bone remodeling by regulating secretory pathways in osteoclasts and osteoblasts. Involved in cholesterol transport from lysosome to peroxisome by promoting membrane contacts between lysosomes and peroxisomes: probably acts by promoting vesicle fusion by binding phosphatidylinositol-4,5-bisphosphate on peroxisomal membranes. Acts as a key mediator of synaptic facilitation, a process also named short-term synaptic potentiation: synaptic facilitation takes place at synapses with a low initial release probability and is caused by influx of Ca(2+) into the axon terminal after spike generation, increasing the release probability of neurotransmitters. Probably mediates synaptic facilitation by directly increasing the probability of release. May also contribute to synaptic facilitation by regulating synaptic vesicle replenishment, a process required to ensure that synaptic vesicles are ready for the arrival of the next action potential: SYT7 is required for synaptic vesicle replenishment by acting as a sensor for Ca(2+) and by forming a complex with calmodulin. Also acts as a regulator of Ca(2+)-dependent insulin and glucagon secretion in beta-cells. Triggers exocytosis by promoting fusion pore opening and fusion pore expansion in chromaffin cells. Also regulates the secretion of some non-synaptic secretory granules of specialized cells. This is Synaptotagmin-7 from Mus musculus (Mouse).